Consider the following 324-residue polypeptide: Dolichyl-phosphate beta-glucosyltransferase (324 aa).

Topologically, residues 1–7 (MAPLLLQ) are lumenal. Residues 8–28 (LAVLGAALAAAALVLISIVAF) traverse the membrane as a helical; Signal-anchor for type II membrane protein segment. The Cytoplasmic portion of the chain corresponds to 29–324 (TTATKMPALH…WRLEQTRKMN (296 aa)).

The protein belongs to the glycosyltransferase 2 family. Expressed in pancreas, placenta, liver, heart, brain, kidney, skeletal muscle, and lung.

It localises to the endoplasmic reticulum membrane. It carries out the reaction a di-trans,poly-cis-dolichyl phosphate + UDP-alpha-D-glucose = a di-trans,poly-cis-dolichyl beta-D-glucosyl phosphate + UDP. It participates in protein modification; protein glycosylation. Functionally, dolichyl-phosphate beta-glucosyltransferase that operates in the biosynthetic pathway of dolichol-linked oligosaccharides, the glycan precursors employed in protein asparagine (N)-glycosylation. The assembly of dolichol-linked oligosaccharides begins on the cytosolic side of the endoplasmic reticulum membrane and finishes in its lumen. The sequential addition of sugars to dolichol pyrophosphate produces dolichol-linked oligosaccharides containing fourteen sugars, including two GlcNAcs, nine mannoses and three glucoses. Once assembled, the oligosaccharide is transferred from the lipid to nascent proteins by oligosaccharyltransferases. Dolichyl-phosphate beta-glucosyltransferase produces dolichyl beta-D-glucosyl phosphate/Dol-P-Glc, the glucose donor substrate used sequentially by ALG6, ALG8 and ALG10 to add glucose residues on top of the Man(9)GlcNAc(2)-PP-Dol structure. These are the three last steps in the biosynthetic pathway of dolichol-linked oligosaccharides to produce Glc(3)Man(9)GlcNAc(2)-PP-Dol. The enzyme is most probably active on the cytoplasmic side of the endoplasmic reticulum while its product Dol-P-Glc is the substrate for ALG6, ALG8 and ALG11 in the lumen of the endoplasmic reticulum. The polypeptide is Dolichyl-phosphate beta-glucosyltransferase (Homo sapiens (Human)).